A 227-amino-acid chain; its full sequence is 2-C-methyl-D-erythritol 4-phosphate cytidylyltransferase (227 aa).

It belongs to the IspD/TarI cytidylyltransferase family. IspD subfamily.

The enzyme catalyses 2-C-methyl-D-erythritol 4-phosphate + CTP + H(+) = 4-CDP-2-C-methyl-D-erythritol + diphosphate. The protein operates within isoprenoid biosynthesis; isopentenyl diphosphate biosynthesis via DXP pathway; isopentenyl diphosphate from 1-deoxy-D-xylulose 5-phosphate: step 2/6. Its function is as follows. Catalyzes the formation of 4-diphosphocytidyl-2-C-methyl-D-erythritol from CTP and 2-C-methyl-D-erythritol 4-phosphate (MEP). The polypeptide is 2-C-methyl-D-erythritol 4-phosphate cytidylyltransferase (Tolumonas auensis (strain DSM 9187 / NBRC 110442 / TA 4)).